The chain runs to 310 residues: Protein CUP-SHAPED COTYLEDON 1 (310 aa).

Positions 20-172 (MPPGFRFHPT…EWVLCKVCLK (153 aa)) constitute an NAC domain. A DNA-binding region spans residues 119–178 (LGMKKTLVFYKGRAPKGEKSCWVMHEYRLDGKFSYHYISSSAKDEWVLCKVCLKSGVVSR). Involved in transactivation activity regions lie at residues 179–210 (ETNLISSSSSSAVTGEFSSAGSAIAPIINTFA) and 306–310 (WPFTL).

As to expression, expressed in inflorescence stems, rosette leaves, aerial parts of seedlings, flowers, floral buds and roots.

It is found in the nucleus. Its function is as follows. Transcription activator of STM and KNAT6. Involved in molecular mechanisms regulating shoot apical meristem (SAM) formation during embryogenesis and organ separation. Required for the fusion of septa of gynoecia along the length of the ovaries. Activates the shoot formation in callus in a STM-dependent manner. Seems to act as an inhibitor of cell division. This is Protein CUP-SHAPED COTYLEDON 1 (NAC054) from Arabidopsis thaliana (Mouse-ear cress).